A 398-amino-acid polypeptide reads, in one-letter code: Peptidyl-prolyl cis-trans isomerase D (398 aa).

Positions 21-185 (FGSSPASRPG…EDVKIVDCGE (165 aa)) constitute a PPIase cyclophilin-type domain. TPR repeat units lie at residues 229-262 (GLALKNMANTQFSKANFDIALEKYSKALRYLQLH), 282-323 (TSIQ…PSTE), and 335-368 (AKAFYRRASAYVAQKDDERAEADLKHALENAPED).

Belongs to the cyclophilin-type PPIase family. PPIase D subfamily.

The protein localises to the cytoplasm. The catalysed reaction is [protein]-peptidylproline (omega=180) = [protein]-peptidylproline (omega=0). PPIases accelerate the folding of proteins. It catalyzes the cis-trans isomerization of proline imidic peptide bonds in oligopeptides. The sequence is that of Peptidyl-prolyl cis-trans isomerase D (CPR6) from Mycosarcoma maydis (Corn smut fungus).